A 306-amino-acid chain; its full sequence is tRNA pseudouridine synthase B (306 aa).

Aspartate 38 acts as the Nucleophile in catalysis.

This sequence belongs to the pseudouridine synthase TruB family. Type 1 subfamily.

The catalysed reaction is uridine(55) in tRNA = pseudouridine(55) in tRNA. Responsible for synthesis of pseudouridine from uracil-55 in the psi GC loop of transfer RNAs. This Syntrophotalea carbinolica (strain DSM 2380 / NBRC 103641 / GraBd1) (Pelobacter carbinolicus) protein is tRNA pseudouridine synthase B.